Consider the following 346-residue polypeptide: Histidinol-phosphate aminotransferase (346 aa).

N6-(pyridoxal phosphate)lysine is present on Lys-209.

It belongs to the class-II pyridoxal-phosphate-dependent aminotransferase family. Histidinol-phosphate aminotransferase subfamily. In terms of assembly, homodimer. Pyridoxal 5'-phosphate is required as a cofactor.

It carries out the reaction L-histidinol phosphate + 2-oxoglutarate = 3-(imidazol-4-yl)-2-oxopropyl phosphate + L-glutamate. Its pathway is amino-acid biosynthesis; L-histidine biosynthesis; L-histidine from 5-phospho-alpha-D-ribose 1-diphosphate: step 7/9. The polypeptide is Histidinol-phosphate aminotransferase (Aliivibrio fischeri (strain MJ11) (Vibrio fischeri)).